Reading from the N-terminus, the 219-residue chain is Lipoprotein-releasing system ATP-binding protein LolD (219 aa).

An ABC transporter domain is found at 3–219 (IEARNIRKSF…HMRDGLLFSE (217 aa)). 35-42 (GTSGAGKT) lines the ATP pocket.

It belongs to the ABC transporter superfamily. Lipoprotein translocase (TC 3.A.1.125) family. The complex is composed of two ATP-binding proteins (LolD) and two transmembrane proteins (LolC and LolE).

It localises to the cell inner membrane. Functionally, part of the ABC transporter complex LolCDE involved in the translocation of mature outer membrane-directed lipoproteins, from the inner membrane to the periplasmic chaperone, LolA. Responsible for the formation of the LolA-lipoprotein complex in an ATP-dependent manner. In Porphyromonas gingivalis (strain ATCC BAA-308 / W83), this protein is Lipoprotein-releasing system ATP-binding protein LolD.